The following is a 612-amino-acid chain: UvrABC system protein C (612 aa).

Positions 15-93 (HLPGVYRMYD…IKQHQPKYNV (79 aa)) constitute a GIY-YIG domain. The region spanning 203–238 (SQVIDYLMQKMEIAASELDFETAARFRDQIQSVRAV) is the UVR domain.

It belongs to the UvrC family. Interacts with UvrB in an incision complex.

It is found in the cytoplasm. The UvrABC repair system catalyzes the recognition and processing of DNA lesions. UvrC both incises the 5' and 3' sides of the lesion. The N-terminal half is responsible for the 3' incision and the C-terminal half is responsible for the 5' incision. The polypeptide is UvrABC system protein C (Haemophilus ducreyi (strain 35000HP / ATCC 700724)).